We begin with the raw amino-acid sequence, 122 residues long: SLVQFEKMIKEETGKNAVPFYAFYGCYCGWGGRGRPKDATDRCCIVHDCCYEKLVKCNTKWDFYRYSLRSGYFQCGKGTWCEQQICECDRVAAECLRRSLSTYRYGKMIYPDSRCREPSETC.

Cystine bridges form between cysteine 26-cysteine 115, cysteine 28-cysteine 44, cysteine 43-cysteine 95, cysteine 49-cysteine 122, cysteine 50-cysteine 88, cysteine 57-cysteine 81, and cysteine 75-cysteine 86. Ca(2+) is bound by residues tyrosine 27, glycine 29, and glycine 31. Histidine 47 is an active-site residue. Aspartate 48 is a Ca(2+) binding site. Aspartate 89 is a catalytic residue.

Ca(2+) serves as cofactor. In terms of tissue distribution, expressed by the venom gland.

It localises to the secreted. It carries out the reaction a 1,2-diacyl-sn-glycero-3-phosphocholine + H2O = a 1-acyl-sn-glycero-3-phosphocholine + a fatty acid + H(+). In terms of biological role, snake venom phospholipase A2 (PLA2) that induces myonecrosis and edema upon subcutaneous injections in mice. In vitro, causes a potent blockade of neuromuscular transmission in young chicken biventer cervicis preparation and produces cytotoxicity in murine C2C12 skeletal muscle myotubes and lack cytolytic activity upon myoblasts in vitro. PLA2 catalyzes the calcium-dependent hydrolysis of the 2-acyl groups in 3-sn-phosphoglycerides. In Crotalus durissus ruruima (South American rattlesnake), this protein is Basic phospholipase A2 Cdr-13.